The sequence spans 183 residues: Microfibrillar-associated protein 2 (183 aa).

The segment at residues 1–16 (MRAACLFLLFMPGLLA) is a signal peptide (or 18). Pyrrolidone carboxylic acid is present on glutamine 17. Sulfotyrosine occurs at positions 46, 47, and 49. The tract at residues 52 to 92 (VSPRTPEEQFQSQQQVQQEVIPAPTPEPAAAGDLETEPTEP) is disordered. Over residues 59–70 (EQFQSQQQVQQE) the composition is skewed to low complexity. Positions 153–183 (CRDKFSKCGVMAVSGLCQSVAASCARSCGGC) constitute a ShKT domain. 3 disulfides stabilise this stretch: cysteine 153–cysteine 183, cysteine 160–cysteine 176, and cysteine 169–cysteine 180.

This sequence belongs to the MFAP family. In terms of assembly, forms a ternary complex with BGN and ELN. Interacts with FBN1 (via N-terminal domain) and FBN2. In terms of processing, forms intermolecular disulfide bonds either with other MAGP-1 molecules or with other components of the microfibrils. May form transglutaminase cross-links. O-glycosylated.

It localises to the secreted. The protein localises to the extracellular space. The protein resides in the extracellular matrix. Component of the elastin-associated microfibrils. The chain is Microfibrillar-associated protein 2 (Mfap2) from Mus musculus (Mouse).